Reading from the N-terminus, the 450-residue chain is Molybdate-anion transporter (450 aa).

A run of 12 helical transmembrane segments spans residues 1–21, 43–63, 79–99, 128–148, 174–194, 195–215, 249–269, 278–298, 311–331, 344–364, 376–396, and 409–429; these read MLVTAYLAFVGLLASCLGLEL, LDFYQVYFLALAADWLQAPYL, ILYVCGLASTVLFGLVASSLV, FVLLVGRALGGLSTALLFSAF, AAFWNHVLAVVAGVAAEAVAS, WIGLGPVAPFVAAIPLLALAG, VLLLGTIQALFESVIFIFVFL, GAPLGIIFSSFMAASLLGSSL, PMHLLSLAVLIVVFSLFMLTF, FIAFLLIELACGLYFPSMSFL, GVLNWFRVPLHSLACLGLLVL, and FSICSAVMVMALLAVVGLFTV.

This sequence belongs to the major facilitator superfamily. As to expression, expressed ubiquitously but at relatively higher levels in the olfactory bulb and the skeletal muscle.

It is found in the cell membrane. In terms of biological role, mediates high-affinity intracellular uptake of the rare oligo-element molybdenum. The chain is Molybdate-anion transporter (MFSD5) from Homo sapiens (Human).